Reading from the N-terminus, the 266-residue chain is Small ribosomal subunit protein uS2 (266 aa).

A disordered region spans residues 227–266 (GVSFTEETPSEPIQSDSSEEEEGSLDISDLFEDTDLKEEE). Over residues 231 to 240 (TEETPSEPIQ) the composition is skewed to polar residues. Residues 243 to 266 (SSEEEEGSLDISDLFEDTDLKEEE) show a composition bias toward acidic residues.

This sequence belongs to the universal ribosomal protein uS2 family.

This is Small ribosomal subunit protein uS2 from Pseudothermotoga lettingae (strain ATCC BAA-301 / DSM 14385 / NBRC 107922 / TMO) (Thermotoga lettingae).